The following is a 406-amino-acid chain: Flavohemoprotein (406 aa).

A Globin domain is found at 6 to 144 (VLLDKKTTEI…IADIFISVEK (139 aa)). His-91 provides a ligand contact to heme b. Active-site charge relay system residues include Tyr-101 and Glu-143. Residues 155 to 406 (GGWTGFRDFK…LFGPLEPIAK (252 aa)) are reductase. Residues 158–267 (TGFRDFKVIK…SAPAGDFILD (110 aa)) enclose the FAD-binding FR-type domain. Residues Tyr-196 and 212-215 (RQYS) contribute to the FAD site. Residue 280-285 (GVGLTP) coordinates NADP(+). An FAD-binding site is contributed by 397-400 (LFGP).

It belongs to the globin family. Two-domain flavohemoproteins subfamily. The protein in the C-terminal section; belongs to the flavoprotein pyridine nucleotide cytochrome reductase family. The cofactor is heme b. It depends on FAD as a cofactor.

The catalysed reaction is 2 nitric oxide + NADPH + 2 O2 = 2 nitrate + NADP(+) + H(+). It catalyses the reaction 2 nitric oxide + NADH + 2 O2 = 2 nitrate + NAD(+) + H(+). In terms of biological role, is involved in NO detoxification in an aerobic process, termed nitric oxide dioxygenase (NOD) reaction that utilizes O(2) and NAD(P)H to convert NO to nitrate, which protects the bacterium from various noxious nitrogen compounds. Therefore, plays a central role in the inducible response to nitrosative stress. In Oceanobacillus iheyensis (strain DSM 14371 / CIP 107618 / JCM 11309 / KCTC 3954 / HTE831), this protein is Flavohemoprotein.